The primary structure comprises 273 residues: Phosphatidylglycerol--prolipoprotein diacylglyceryl transferase (273 aa).

The next 7 membrane-spanning stretches (helical) occupy residues 21–41 (VSIR…LWLA), 60–80 (LLFA…VIFY), 95–115 (VWTG…AMFW), 124–144 (FFGV…MGRM), 176–196 (SQLY…NWFI), 203–223 (GSVS…VEFV), and 237–257 (ISMG…MMVW). Arg-143 is an a 1,2-diacyl-sn-glycero-3-phospho-(1'-sn-glycerol) binding site.

It belongs to the Lgt family.

It is found in the cell inner membrane. The enzyme catalyses L-cysteinyl-[prolipoprotein] + a 1,2-diacyl-sn-glycero-3-phospho-(1'-sn-glycerol) = an S-1,2-diacyl-sn-glyceryl-L-cysteinyl-[prolipoprotein] + sn-glycerol 1-phosphate + H(+). Its pathway is protein modification; lipoprotein biosynthesis (diacylglyceryl transfer). Functionally, catalyzes the transfer of the diacylglyceryl group from phosphatidylglycerol to the sulfhydryl group of the N-terminal cysteine of a prolipoprotein, the first step in the formation of mature lipoproteins. The protein is Phosphatidylglycerol--prolipoprotein diacylglyceryl transferase of Vibrio parahaemolyticus serotype O3:K6 (strain RIMD 2210633).